A 336-amino-acid polypeptide reads, in one-letter code: Coproporphyrin III ferrochelatase (336 aa).

2 residues coordinate Fe-coproporphyrin III: serine 52 and tyrosine 116. The Fe(2+) site is built by histidine 172 and glutamate 255.

It belongs to the ferrochelatase family.

It localises to the cytoplasm. The enzyme catalyses Fe-coproporphyrin III + 2 H(+) = coproporphyrin III + Fe(2+). It functions in the pathway porphyrin-containing compound metabolism; protoheme biosynthesis. In terms of biological role, involved in coproporphyrin-dependent heme b biosynthesis. Catalyzes the insertion of ferrous iron into coproporphyrin III to form Fe-coproporphyrin III. The polypeptide is Coproporphyrin III ferrochelatase (Mycolicibacterium paratuberculosis (strain ATCC BAA-968 / K-10) (Mycobacterium paratuberculosis)).